The sequence spans 87 residues: Beta-toxin Cn4 (87 aa).

The signal sequence occupies residues 1–19; the sequence is MNSLLMITACLALVGTVWA. In terms of domain architecture, LCN-type CS-alpha/beta spans 20–85; sequence KEGYLVNSYT…VWPLKNKTCN (66 aa). Intrachain disulfides connect C31-C84, C35-C60, C44-C65, and C48-C67. An Asparagine amide modification is found at N85.

This sequence belongs to the long (4 C-C) scorpion toxin superfamily. Sodium channel inhibitor family. Beta subfamily. As to expression, expressed by the venom gland.

The protein localises to the secreted. Beta toxins bind voltage-independently at site-4 of sodium channels (Nav) and shift the voltage of activation toward more negative potentials thereby affecting sodium channel activation and promoting spontaneous and repetitive firing. This toxin affects the activation mechanism of sodium channels of squid axon. It also competes with Cn2 in rat brain synaptosomes. Is lethal to mice. This is Beta-toxin Cn4 from Centruroides noxius (Mexican scorpion).